We begin with the raw amino-acid sequence, 347 residues long: Histone deacetylase 11 (347 aa).

Positions 14-318 (KRWPIVYSPR…ARIIADSILN (305 aa)) are histone deacetylase. His-143 is an active-site residue.

Belongs to the histone deacetylase family. Interacts with HDAC6.

It localises to the nucleus. The catalysed reaction is N(6)-acetyl-L-lysyl-[histone] + H2O = L-lysyl-[histone] + acetate. Responsible for the deacetylation of lysine residues on the N-terminal part of the core histones (H2A, H2B, H3 and H4). Histone deacetylation gives a tag for epigenetic repression and plays an important role in transcriptional regulation, cell cycle progression and developmental events. Histone deacetylases act via the formation of large multiprotein complexes. In Mus musculus (Mouse), this protein is Histone deacetylase 11 (Hdac11).